The following is an 86-amino-acid chain: Cytochrome c6 (86 aa).

4 residues coordinate heme c: cysteine 14, cysteine 17, histidine 18, and methionine 58.

The protein belongs to the cytochrome c family. PetJ subfamily. As to quaternary structure, monomer. Binds 1 heme c group covalently per subunit.

The protein localises to the plastid. It localises to the chloroplast thylakoid lumen. Functionally, functions as an electron carrier between membrane-bound cytochrome b6-f and photosystem I in oxygenic photosynthesis. The polypeptide is Cytochrome c6 (petJ) (Alaria esculenta (Irish wakame)).